Consider the following 199-residue polypeptide: Pyridoxal 5'-phosphate synthase subunit PdxT (199 aa).

52-54 (GES) serves as a coordination point for L-glutamine. Catalysis depends on cysteine 84, which acts as the Nucleophile. L-glutamine contacts are provided by residues arginine 115 and 143 to 144 (IR). Catalysis depends on charge relay system residues histidine 179 and glutamate 181.

This sequence belongs to the glutaminase PdxT/SNO family. In the presence of PdxS, forms a dodecamer of heterodimers. Only shows activity in the heterodimer.

It carries out the reaction aldehydo-D-ribose 5-phosphate + D-glyceraldehyde 3-phosphate + L-glutamine = pyridoxal 5'-phosphate + L-glutamate + phosphate + 3 H2O + H(+). It catalyses the reaction L-glutamine + H2O = L-glutamate + NH4(+). It functions in the pathway cofactor biosynthesis; pyridoxal 5'-phosphate biosynthesis. Catalyzes the hydrolysis of glutamine to glutamate and ammonia as part of the biosynthesis of pyridoxal 5'-phosphate. The resulting ammonia molecule is channeled to the active site of PdxS. This chain is Pyridoxal 5'-phosphate synthase subunit PdxT, found in Methanosarcina acetivorans (strain ATCC 35395 / DSM 2834 / JCM 12185 / C2A).